The chain runs to 478 residues: 5-hydroxytryptamine receptor 3A (478 aa).

An N-terminal signal peptide occupies residues 1-23 (MLLWVQQALLALLLPTLLAQGEA). At 24-241 (RRSRNTTRPA…MKFYVVIRRR (218 aa)) the chain is on the extracellular side. N-linked (GlcNAc...) asparagine glycosylation is found at asparagine 28, asparagine 104, asparagine 170, and asparagine 186. Cysteine 157 and cysteine 171 are joined by a disulfide. The chain crosses the membrane as a helical span at residues 242-268 (PLFYVVSLLLPSIFLMVMDIVGFYLPP). Over 269 to 273 (NSGER) the chain is Cytoplasmic. The chain crosses the membrane as a helical span at residues 274 to 292 (VSFKITLLLGYSVFLIIVS). At 293–302 (DTLPATAIGT) the chain is on the extracellular side. Residues 303-321 (PLIGVYFVVCMALLVISLA) traverse the membrane as a helical segment. Residues 322–455 (ETIFIVRLVH…GSVLDKLLFH (134 aa)) are Cytoplasmic-facing. The interval 389-408 (GGPQDFEKSPRDRCSPPPPP) is disordered. Residues 393–402 (DFEKSPRDRC) show a composition bias toward basic and acidic residues. The segment at 414–450 (AVCGLLQELSSIRQFLEKRDEIREVARDWLRVGSVLD) is HA-stretch; determines single-channel conductance in 5-HT3 receptors. The helical transmembrane segment at 456-475 (IYLLAVLAYSITLVMLWSIW) threads the bilayer. Residues 476-478 (QYA) are Extracellular-facing.

This sequence belongs to the ligand-gated ion channel (TC 1.A.9) family. 5-hydroxytryptamine receptor (TC 1.A.9.2) subfamily. HTR3A sub-subfamily. As to quaternary structure, forms homopentameric as well as heteropentameric serotonin-activated cation-selective channel complexes with HTR3B or HTR3C or HTR3D or HTR3E. The homomeric complex is functional but exhibits low conductance with modified voltage dependence, and decreased agonist and antagonist affinity. Heteropentameric complexes display properties which resemble that of neuronal serotonin-activated channels in vivo. Interacts with RIC3. In terms of tissue distribution, expressed in cerebral cortex, amygdala, hippocampus, and testis. Detected in monocytes of the spleen and tonsil, in small and large intestine, uterus, prostate, ovary and placenta.

It is found in the postsynaptic cell membrane. The protein localises to the cell membrane. It carries out the reaction Na(+)(in) = Na(+)(out). The catalysed reaction is K(+)(in) = K(+)(out). It catalyses the reaction Ca(2+)(in) = Ca(2+)(out). The enzyme catalyses Mg(2+)(in) = Mg(2+)(out). Its function is as follows. Forms serotonin (5-hydroxytryptamine/5-HT3)-activated cation-selective channel complexes, which when activated cause fast, depolarizing responses in neurons. This chain is 5-hydroxytryptamine receptor 3A, found in Homo sapiens (Human).